The sequence spans 233 residues: Transcriptional regulatory protein WalR (233 aa).

Residues 4-117 (KVVVVDDEKP…ELIARVKANL (114 aa)) form the Response regulatory domain. D53 carries the post-translational modification 4-aspartylphosphate. The ompR/PhoB-type DNA-binding region spans 132 to 231 (TNEITIKDIV…RRGVGYFLQQ (100 aa)).

Phosphorylated by WalK.

It localises to the cytoplasm. Member of the two-component regulatory system WalK/WalR. The sequence is that of Transcriptional regulatory protein WalR (walR) from Staphylococcus haemolyticus (strain JCSC1435).